The primary structure comprises 249 residues: 5'-nucleotidase SurE (249 aa).

The a divalent metal cation site is built by aspartate 9, aspartate 10, serine 40, and asparagine 92.

Belongs to the SurE nucleotidase family. Requires a divalent metal cation as cofactor.

It localises to the cytoplasm. The catalysed reaction is a ribonucleoside 5'-phosphate + H2O = a ribonucleoside + phosphate. Its function is as follows. Nucleotidase that shows phosphatase activity on nucleoside 5'-monophosphates. In Shewanella sediminis (strain HAW-EB3), this protein is 5'-nucleotidase SurE.